A 515-amino-acid polypeptide reads, in one-letter code: Methionine--tRNA ligase (515 aa).

Positions 13–23 match the 'HIGH' region motif; that stretch reads AYPNGKPHIGH. The short motif at 300-304 is the 'KMSKS' region element; that stretch reads KMSKS. Lysine 303 provides a ligand contact to ATP.

It belongs to the class-I aminoacyl-tRNA synthetase family. MetG type 2B subfamily. As to quaternary structure, monomer.

The protein resides in the cytoplasm. The catalysed reaction is tRNA(Met) + L-methionine + ATP = L-methionyl-tRNA(Met) + AMP + diphosphate. Functionally, is required not only for elongation of protein synthesis but also for the initiation of all mRNA translation through initiator tRNA(fMet) aminoacylation. The chain is Methionine--tRNA ligase from Brucella melitensis biotype 1 (strain ATCC 23456 / CCUG 17765 / NCTC 10094 / 16M).